Here is a 150-residue protein sequence, read N- to C-terminus: Snaclec rhinocetin subunit beta (150 aa).

Residues 1-23 form the signal peptide; sequence MGRFIFLSSGLLVVFLSLSGTGA. 3 disulfides stabilise this stretch: C27–C38, C55–C144, and C121–C136. A C-type lectin domain is found at 34–145; it reads YEGYCYKVFK…CNRQQYFVCK (112 aa).

Belongs to the snaclec family. In terms of assembly, heterodimer; disulfide-linked. Expressed by the venom gland.

It localises to the secreted. Functionally, antagonist of the alpha-2 subunit of the integrin alpha-2/beta-1 (ITGA2/ITGB1) on human platelets and endothelial cells. This protein inhibits collagen-stimulated activation of human platelets in a dose-dependent manner. In addition, it antagonizes the binding of monoclonal antibodies against the alpha-2 subunit of integrin alpha-2/beta-1 to platelets and it coimmunoprecipitates with this integrin. This is Snaclec rhinocetin subunit beta from Bitis rhinoceros (West African gaboon viper).